The sequence spans 77 residues: Conotoxin Vc6b (77 aa).

An N-terminal signal peptide occupies residues 1–22; the sequence is MKLTCMMIVAVLFLTANTFVTA. A propeptide spanning residues 23–47 is cleaved from the precursor; sequence DDSGNGMENLFPKAGHEMENLEASN. 3 disulfide bridges follow: Cys52–Cys66, Cys59–Cys72, and Cys67–Cys76.

In terms of tissue distribution, expressed by the venom duct.

It is found in the secreted. The protein is Conotoxin Vc6b of Conus victoriae (Queen Victoria cone).